Reading from the N-terminus, the 259-residue chain is Global transcriptional regulator CodY (259 aa).

A GAF domain region spans residues 1–155 (MNLLEKTRKI…GATVVGMEIL (155 aa)). The H-T-H motif DNA-binding region spans 203-222 (ASKIADRVGITRSVIVNALR). At Ser-215 the chain carries Phosphoserine.

This sequence belongs to the CodY family.

It is found in the cytoplasm. Functionally, DNA-binding global transcriptional regulator which is involved in the adaptive response to starvation and acts by directly or indirectly controlling the expression of numerous genes in response to nutrient availability. During rapid exponential growth, CodY is highly active and represses genes whose products allow adaptation to nutrient depletion. The sequence is that of Global transcriptional regulator CodY from Anoxybacillus flavithermus (strain DSM 21510 / WK1).